Reading from the N-terminus, the 489-residue chain is NF-kappa-B inhibitor cactus (489 aa).

The segment covering 1-26 (MPSPTKAAEAATKATATSDCSCSAAS) has biased composition (low complexity). 2 disordered regions span residues 1–138 (MPSP…SMRL) and 163–203 (NNLG…APPS). Residue S45 is modified to Phosphoserine; by PKC. A compositionally biased stretch (polar residues) spans 69–86 (NETSDSGFISGPQSSQIC). The residue at position 135 (S135) is a Phosphoserine; by PKC. Polar residues predominate over residues 163 to 180 (NNLGQSSSTQITGRSKFQ). T174 carries the post-translational modification Phosphothreonine; by PKC. Low complexity predominate over residues 181-203 (SSTASTANANPSGXGATSSAPPS). ANK repeat units lie at residues 220–252 (DGDT…LLNI), 256–285 (VAQT…EVRD), 287–316 (HGNT…ATEI), 350–379 (DGER…DINA), and 384–413 (SGRT…KLNL). T308 carries the phosphothreonine; by PKC modification. Position 384 is a phosphoserine; by PKC (S384).

It is found in the cytoplasm. Involved in the formation of the dorsoventral pattern. It inhibits nuclear translocation of the dorsal morphogen in the dorsal region of the embryo. The protein is NF-kappa-B inhibitor cactus (cact) of Drosophila yakuba (Fruit fly).